The chain runs to 374 residues: S-adenosylmethionine:tRNA ribosyltransferase-isomerase (374 aa).

It belongs to the QueA family. Monomer.

Its subcellular location is the cytoplasm. The catalysed reaction is 7-aminomethyl-7-carbaguanosine(34) in tRNA + S-adenosyl-L-methionine = epoxyqueuosine(34) in tRNA + adenine + L-methionine + 2 H(+). It participates in tRNA modification; tRNA-queuosine biosynthesis. Transfers and isomerizes the ribose moiety from AdoMet to the 7-aminomethyl group of 7-deazaguanine (preQ1-tRNA) to give epoxyqueuosine (oQ-tRNA). The chain is S-adenosylmethionine:tRNA ribosyltransferase-isomerase from Prochlorococcus marinus (strain MIT 9301).